A 324-amino-acid chain; its full sequence is Glyoxylate/hydroxypyruvate reductase B (324 aa).

Catalysis depends on residues arginine 237 and glutamate 266. Histidine 285 functions as the Proton donor in the catalytic mechanism.

Belongs to the D-isomer specific 2-hydroxyacid dehydrogenase family. GhrB subfamily. In terms of assembly, homodimer.

It is found in the cytoplasm. It carries out the reaction glycolate + NADP(+) = glyoxylate + NADPH + H(+). The catalysed reaction is (R)-glycerate + NAD(+) = 3-hydroxypyruvate + NADH + H(+). The enzyme catalyses (R)-glycerate + NADP(+) = 3-hydroxypyruvate + NADPH + H(+). Functionally, catalyzes the NADPH-dependent reduction of glyoxylate and hydroxypyruvate into glycolate and glycerate, respectively. The polypeptide is Glyoxylate/hydroxypyruvate reductase B (Shigella boydii serotype 4 (strain Sb227)).